The chain runs to 292 residues: 4-hydroxy-tetrahydrodipicolinate synthase (292 aa).

Thr45 serves as a coordination point for pyruvate. Tyr133 functions as the Proton donor/acceptor in the catalytic mechanism. Lys161 functions as the Schiff-base intermediate with substrate in the catalytic mechanism. Ile203 contacts pyruvate.

This sequence belongs to the DapA family. As to quaternary structure, homodimer.

It localises to the cytoplasm. It catalyses the reaction L-aspartate 4-semialdehyde + pyruvate = (2S,4S)-4-hydroxy-2,3,4,5-tetrahydrodipicolinate + H2O + H(+). It participates in amino-acid biosynthesis; L-lysine biosynthesis via DAP pathway; (S)-tetrahydrodipicolinate from L-aspartate: step 3/4. Its function is as follows. Catalyzes the condensation of (S)-aspartate-beta-semialdehyde [(S)-ASA] and pyruvate to 4-hydroxy-tetrahydrodipicolinate (HTPA). The chain is 4-hydroxy-tetrahydrodipicolinate synthase from Pseudomonas syringae pv. syringae (strain B728a).